A 749-amino-acid chain; its full sequence is MNTATQASVSLTPEFIAATEKEITPHWGELGWVTYKRTYARWLPEQQRNEEWPETVKRVVEGNINLDPRLQADTVTPEVLTELTTEAQNLFRLIYGLAATPSGRNLWISGTDYQHRNGDALNNCWFIAVRPQAYGDSHILPSYLTQDQVAVSMPFSFMFDQLMKGGGVGFSVTPNNVHQMPVVDQTVDLTIVIDPESASYADSVALGAVNRSEWMHDNSLADVRFYRLPDTREGWVLANANMMDAHFNSTNPEKKTKVVLDISDIRPKNAPIHGFGGTASGPMPLVEMLFDINQILNNAVGRQLTAVDCTDMGNMIGKTVVAGNVRRSAELALGGAEDDAFITMKQDKDQLYHHRWASNNSVAVDSDFTDYAPIADSIQHNGEPGIVNLGLSRNYGRLIDGRQEGIDEAVEGTNPCGEISLSNGEPCNLFEVFPSVAEEQGWQLEDAFGLGARYTKRVTFSHYDWEVSRKAIQKNRRIGVSMSGIQDWILKTFKQRVVTGFEAKHDAETGKTFMQPIYNQAAVNRFNALYQAVVKADQDYSDTLGCQPSIKHTTVKPSGTVAKLAGVSEGMHFHYARYLIQRIRFQDSDPLLPALKASGYKVEPDVYSQNTMCVEFPVKAAHADEPAFASAGEVSMAEQFATQAFLQTYWSDNAVSCTVTFQPEEGQDISDLLLQYRHTIKSTSLLPYSGADFKQAPKEPIDAATYDAKCQEITADVAEKFAAMTGNHDQKDIELVDQSDCESGACPIR.

A disulfide bridge links Cys-124 with Cys-427. The effector region-1 stretch occupies residues 152–163 (SMPFSFMFDQLM). An effector region-2 region spans residues 173–321 (TPNNVHQMPV…MGNMIGKTVV (149 aa)). Catalysis depends on residues Cys-416 and Glu-418. An adenosylcobalamin-binding-1 region spans residues 573-634 (FHYARYLIQR…EPAFASAGEV (62 aa)). The segment at 693–734 (FKQAPKEPIDAATYDAKCQEITADVAEKFAAMTGNHDQKDIE) is adenosylcobalamin-binding-2.

It belongs to the class II ribonucleoside-triphosphate reductase family. As to quaternary structure, monomer. Adenosylcob(III)alamin is required as a cofactor.

It catalyses the reaction a 2'-deoxyribonucleoside 5'-triphosphate + [thioredoxin]-disulfide + H2O = a ribonucleoside 5'-triphosphate + [thioredoxin]-dithiol. Allosterically regulated by ATP and dNTP. In Levilactobacillus brevis (strain ATCC 367 / BCRC 12310 / CIP 105137 / JCM 1170 / LMG 11437 / NCIMB 947 / NCTC 947) (Lactobacillus brevis), this protein is Adenosylcobalamin-dependent ribonucleoside-triphosphate reductase (rtpR).